Reading from the N-terminus, the 326-residue chain is tRNA-dihydrouridine(20/20a) synthase (326 aa).

FMN contacts are provided by residues 11 to 13 and glutamine 63; that span reads PML. Cysteine 93 acts as the Proton donor in catalysis. FMN-binding positions include lysine 132, histidine 165, 205–207, and 227–228; these read NGG and GR.

This sequence belongs to the Dus family. DusA subfamily. It depends on FMN as a cofactor.

It catalyses the reaction 5,6-dihydrouridine(20) in tRNA + NADP(+) = uridine(20) in tRNA + NADPH + H(+). The catalysed reaction is 5,6-dihydrouridine(20) in tRNA + NAD(+) = uridine(20) in tRNA + NADH + H(+). The enzyme catalyses 5,6-dihydrouridine(20a) in tRNA + NADP(+) = uridine(20a) in tRNA + NADPH + H(+). It carries out the reaction 5,6-dihydrouridine(20a) in tRNA + NAD(+) = uridine(20a) in tRNA + NADH + H(+). Its function is as follows. Catalyzes the synthesis of 5,6-dihydrouridine (D), a modified base found in the D-loop of most tRNAs, via the reduction of the C5-C6 double bond in target uridines. Specifically modifies U20 and U20a in tRNAs. This Vibrio vulnificus (strain CMCP6) protein is tRNA-dihydrouridine(20/20a) synthase.